The chain runs to 316 residues: MEREEFVEFVERILRRIGFKTLKLNFRGGCFNLVATRSLLLLFIKALANIDKFSEEQAEDLKRLAKLFKASPILVGLRTKNYEMEDGIVYERFGIYAVTPGTLYSMFAEGEPPLIMAERGGFYVRIDGKRLKDLREKHGYSLSELANILGVSRKSLQRYEKGDSMVTLEVALRLEEVFDEALVKPINVLKAKFDEISLSSKPETTLEREVFERLERIGMEVVKVKTAPFNAITTEEEDNIELLTGIDEKKTEKTLRRAELVSQMAEIVGSEGMFVLKRARIEVVNKVPILPTRVLEEVRDADELLEIINELKEAKS.

Positions 131 to 189 (LKDLREKHGYSLSELANILGVSRKSLQRYEKGDSMVTLEVALRLEEVFDEALVKPINVL) constitute an HTH cro/C1-type domain. Residues 142–161 (LSELANILGVSRKSLQRYEK) constitute a DNA-binding region (H-T-H motif).

This is Putative HTH-type transcriptional regulatory protein PYRAB03670 from Pyrococcus abyssi (strain GE5 / Orsay).